Here is a 133-residue protein sequence, read N- to C-terminus: Transcription antitermination protein NusB (133 aa).

Belongs to the NusB family.

Its function is as follows. Involved in transcription antitermination. Required for transcription of ribosomal RNA (rRNA) genes. Binds specifically to the boxA antiterminator sequence of the ribosomal RNA (rrn) operons. This is Transcription antitermination protein NusB from Shouchella clausii (strain KSM-K16) (Alkalihalobacillus clausii).